The following is a 192-amino-acid chain: Large ribosomal subunit protein bL9 (192 aa).

The disordered stretch occupies residues D172 to A192. The segment covering F179 to A192 has biased composition (acidic residues).

It belongs to the bacterial ribosomal protein bL9 family.

Its function is as follows. Binds to the 23S rRNA. This chain is Large ribosomal subunit protein bL9, found in Rhizobium johnstonii (strain DSM 114642 / LMG 32736 / 3841) (Rhizobium leguminosarum bv. viciae).